The chain runs to 31 residues: Delta-conotoxin-like ErVIA (31 aa).

Residues 1-4 constitute a propeptide that is removed on maturation; sequence LNKR. 3 cysteine pairs are disulfide-bonded: Cys5-Cys21, Cys12-Cys25, and Cys20-Cys29.

The protein belongs to the conotoxin O1 superfamily. Expressed by the venom duct.

It localises to the secreted. Functionally, this toxin activates voltage-gated sodium channels. It shifts the voltage-dependence of activation to more hyperpolarized potentials but has only little effect on channel inactivation. It is active on Nav1.3/SCN3A (EC(50)=3.98 nM), Nav1.4/SCN4A (EC(50)=4.99 nM), Nav1.6/SCN8A (EC(50)=1.27 nM) and Nav1.7/SCN9A (EC(50)=2.42 nM) voltage-gated sodium channels. In vivo, it induces nocifensive or pain-like behaviors in mice when injected intraplantarly. This Conus eburneus (Ivory cone) protein is Delta-conotoxin-like ErVIA.